The chain runs to 338 residues: NADPH dehydrogenase (338 aa).

Tyrosine 28 contacts substrate. FMN is bound by residues alanine 60 and glutamine 102. 164-167 (HAAH) lines the substrate pocket. FMN-binding positions include arginine 215 and 307-308 (AR).

This sequence belongs to the NADH:flavin oxidoreductase/NADH oxidase family. NamA subfamily. Homotetramer. The cofactor is FMN.

It carries out the reaction A + NADPH + H(+) = AH2 + NADP(+). Its function is as follows. Catalyzes the reduction of the double bond of an array of alpha,beta-unsaturated aldehydes and ketones. It also reduces the nitro group of nitroester and nitroaromatic compounds. It could have a role in detoxification processes. This is NADPH dehydrogenase from Bacillus velezensis (strain DSM 23117 / BGSC 10A6 / LMG 26770 / FZB42) (Bacillus amyloliquefaciens subsp. plantarum).